Consider the following 582-residue polypeptide: Threonine--tRNA ligase (582 aa).

The tract at residues 185–478 (DHRKLGKELE…LTEQYGGAFP (294 aa)) is catalytic. Positions 278, 329, and 455 each coordinate Zn(2+).

Belongs to the class-II aminoacyl-tRNA synthetase family. As to quaternary structure, homodimer. Zn(2+) is required as a cofactor.

Its subcellular location is the cytoplasm. It carries out the reaction tRNA(Thr) + L-threonine + ATP = L-threonyl-tRNA(Thr) + AMP + diphosphate + H(+). Catalyzes the attachment of threonine to tRNA(Thr) in a two-step reaction: L-threonine is first activated by ATP to form Thr-AMP and then transferred to the acceptor end of tRNA(Thr). Also edits incorrectly charged L-seryl-tRNA(Thr). This Dehalococcoides mccartyi (strain ATCC BAA-2100 / JCM 16839 / KCTC 5957 / BAV1) protein is Threonine--tRNA ligase.